A 401-amino-acid chain; its full sequence is Serine/threonine transporter SstT (401 aa).

The next 8 membrane-spanning stretches (helical) occupy residues 17-37 (IGIGVVLGVLLGLIAPKITVI), 40-60 (FGSLFVGALKAIAPLLVLTLV), 78-98 (VICLYLFGTFAAAFIAVGASY), 138-158 (ALATANYIGVLTWAAVFGLAF), 179-199 (VVGWIIGLAPFGIMGLVFDTI), 212-232 (LLLLLLVGSMIFVALVVNPLI), 295-315 (MAGAAITINILTMAAVHTLGI), and 336-356 (ASGVAGGSLLLIPVACSLFGI).

This sequence belongs to the dicarboxylate/amino acid:cation symporter (DAACS) (TC 2.A.23) family.

It is found in the cell membrane. It carries out the reaction L-serine(in) + Na(+)(in) = L-serine(out) + Na(+)(out). The catalysed reaction is L-threonine(in) + Na(+)(in) = L-threonine(out) + Na(+)(out). Involved in the import of serine and threonine into the cell, with the concomitant import of sodium (symport system). The chain is Serine/threonine transporter SstT from Streptococcus suis (strain 98HAH33).